Reading from the N-terminus, the 463-residue chain is Fumarate hydratase class II (463 aa).

Substrate is bound by residues 97–99, 128–131, 138–140, and T186; these read SGT, HPND, and SSN. The active-site Proton donor/acceptor is H187. Residue S317 is part of the active site. Substrate contacts are provided by residues S318 and 323-325; that span reads KVN.

Belongs to the class-II fumarase/aspartase family. Fumarase subfamily. In terms of assembly, homotetramer.

The protein resides in the cytoplasm. It catalyses the reaction (S)-malate = fumarate + H2O. Its pathway is carbohydrate metabolism; tricarboxylic acid cycle; (S)-malate from fumarate: step 1/1. Its function is as follows. Involved in the TCA cycle. Catalyzes the stereospecific interconversion of fumarate to L-malate. The protein is Fumarate hydratase class II of Campylobacter jejuni subsp. jejuni serotype O:2 (strain ATCC 700819 / NCTC 11168).